A 533-amino-acid polypeptide reads, in one-letter code: Non-specific phospholipase C1 (533 aa).

An N-terminal signal peptide occupies residues Met-1–Ser-22.

This sequence belongs to the bacterial phospholipase C family. In terms of tissue distribution, expressed in roots, leaves, stems, flowers and siliques.

The protein resides in the secreted. This is Non-specific phospholipase C1 (NPC1) from Arabidopsis thaliana (Mouse-ear cress).